The primary structure comprises 294 residues: 4-diphosphocytidyl-2-C-methyl-D-erythritol kinase (294 aa).

Lys15 is a catalytic residue. 101–111 (PSEAGLGGGSS) is a binding site for ATP. The active site involves Asp143.

This sequence belongs to the GHMP kinase family. IspE subfamily.

It catalyses the reaction 4-CDP-2-C-methyl-D-erythritol + ATP = 4-CDP-2-C-methyl-D-erythritol 2-phosphate + ADP + H(+). Its pathway is isoprenoid biosynthesis; isopentenyl diphosphate biosynthesis via DXP pathway; isopentenyl diphosphate from 1-deoxy-D-xylulose 5-phosphate: step 3/6. Its function is as follows. Catalyzes the phosphorylation of the position 2 hydroxy group of 4-diphosphocytidyl-2C-methyl-D-erythritol. The protein is 4-diphosphocytidyl-2-C-methyl-D-erythritol kinase of Fusobacterium nucleatum subsp. nucleatum (strain ATCC 25586 / DSM 15643 / BCRC 10681 / CIP 101130 / JCM 8532 / KCTC 2640 / LMG 13131 / VPI 4355).